A 575-amino-acid chain; its full sequence is Golgi-associated kinase 1A (575 aa).

The signal sequence occupies residues 1-29; that stretch reads MASWLRRKLRGKRRPVIAFCLLMILSAMA. Residues 30-119 constitute a propeptide, removed in mature form; it reads VTRFPPQRPS…GDLRHPGRVR (90 aa). Residues 53–58 form an O-glycosylated at one site region; it reads TGAPAT. Residues 143 to 153 are compositionally biased toward basic and acidic residues; sequence VGDPGTKDLGH. Residues 143 to 162 form a disordered region; that stretch reads VGDPGTKDLGHPQHGSPIQE. The propeptide at 437–575 is removed in mature form; it reads RYCCGFEPEP…NLTLFRDEDP (139 aa). Asparagine 566 carries an N-linked (GlcNAc...) asparagine glycan.

The protein belongs to the GASK family. Post-translationally, O-glycosylated with core 1 or possibly core 8 glycans. Proteolytically cleaved. Cleaved at Arg-120 and Arg-437 leading to a processed mature product of 35 kDa. The cleavage takes place in the Golgi apparatus. In terms of tissue distribution, expressed in skin, lung and colon (at protein level).

The protein localises to the secreted. The protein resides in the endoplasmic reticulum. Its subcellular location is the golgi apparatus. It is found in the membrane. It localises to the caveola. This Homo sapiens (Human) protein is Golgi-associated kinase 1A.